Here is a 100-residue protein sequence, read N- to C-terminus: Small ribosomal subunit protein uS14c (100 aa).

The disordered stretch occupies residues 1–22 (MARKGLIQRENKRQKLEQKYHS). Residues 7-20 (IQRENKRQKLEQKY) are compositionally biased toward basic and acidic residues.

The protein belongs to the universal ribosomal protein uS14 family. As to quaternary structure, part of the 30S ribosomal subunit.

The protein localises to the plastid. The protein resides in the chloroplast. Its function is as follows. Binds 16S rRNA, required for the assembly of 30S particles. The protein is Small ribosomal subunit protein uS14c of Daucus carota (Wild carrot).